Consider the following 663-residue polypeptide: Heparan-alpha-glucosaminide N-acetyltransferase (663 aa).

A disordered region spans residues 1–24 (MTGARASAAEQRRAGRSGQARAAE). Residues 1–190 (MTGARASAAE…LAVNEDPVDS (190 aa)) lie on the Lumenal, vesicle side of the membrane. 3 N-linked (GlcNAc...) asparagine glycosylation sites follow: Asn94, Asn142, and Asn162. A disulfide bond links Cys151 and Cys462. The helical transmembrane segment at 191 to 211 (NLPVSIAFLIGLAVIIVISFL) threads the bilayer. Residues 212–275 (RLLLSLDDFN…PRLRSVDTFR (64 aa)) lie on the Cytoplasmic side of the membrane. Phosphoserine is present on residues Ser243 and Ser245. The chain crosses the membrane as a helical span at residues 276–296 (GIALILMVFVNYGGGKYWYFK). Residue His297 is part of the active site. Residues 297 to 302 (HASWNG) are Lumenal, vesicle-facing. A helical membrane pass occupies residues 303 to 323 (LTVADLVFPWFVFIMGSSIFL). The Cytoplasmic portion of the chain corresponds to 324–345 (SMTSILQRGCSKFRLLGKIAWR). A helical transmembrane segment spans residues 346–366 (SFLLICIGIIIVNPNYCLGPL). Residues 367–374 (SWDKVRIP) are Lumenal, vesicle-facing. Residues 375–395 (GVLQRLGVTYFVVAVLELLFA) traverse the membrane as a helical segment. Topologically, residues 396 to 420 (KPVPEHCASERSCLSLRDITSSWPQ) are cytoplasmic. The helical transmembrane segment at 421-441 (WLLILVLEGLWLGLTFLLPVP) threads the bilayer. At 442-500 (GCPTGYLGPGGIGDFGKYPNCTGGAAGYIDRLLLGDDHLYQHPSSAVLYHTEVAYDPEG) the chain is on the lumenal, vesicle side. A helical membrane pass occupies residues 501 to 521 (ILGTINSIVMAFLGVQAGKIL). Over 522–529 (LYYKARTK) the chain is Cytoplasmic. A helical transmembrane segment spans residues 530-550 (DILIRFTAWCCILGLISVALT). Residues 551-564 (KVSENEGFIPVNKN) are Lumenal, vesicle-facing. The helical transmembrane segment at 565-585 (LWSLSYVTTLSSFAFFILLVL) threads the bilayer. Residues 586 to 592 (YPVVDVK) are Cytoplasmic-facing. Residues 593-613 (GLWTGTPFFYPGMNSILVYVG) traverse the membrane as a helical segment. At 614–634 (HEVFENYFPFQWKLKDNQSHK) the chain is on the lumenal, vesicle side. A lysosomal targeting region region spans residues 624-635 (QWKLKDNQSHKE). The chain crosses the membrane as a helical span at residues 635–655 (EHLTQNIVATALWVLIAYILY). The Cytoplasmic portion of the chain corresponds to 656–663 (RKKIFWKI).

Homooligomer. Homooligomerization is necessary for enzyme activity. Post-translationally, undergoes intralysosomal proteolytic cleavage; occurs within the end of the first and/or the beginning of the second luminal domain and is essential for the activation of the enzyme. In terms of processing, glycosylated. As to expression, widely expressed, with highest level in leukocytes, heart, liver, skeletal muscle, lung, placenta and liver.

It is found in the lysosome membrane. The enzyme catalyses alpha-D-glucosaminyl-[heparan sulfate](n) + acetyl-CoA = N-acetyl-alpha-D-glucosaminyl-[heparan sulfate](n) + CoA + H(+). Its function is as follows. Lysosomal acetyltransferase that acetylates the non-reducing terminal alpha-glucosamine residue of intralysosomal heparin or heparan sulfate, converting it into a substrate for luminal alpha-N-acetyl glucosaminidase. This chain is Heparan-alpha-glucosaminide N-acetyltransferase (HGSNAT), found in Homo sapiens (Human).